The following is a 129-amino-acid chain: Glycine cleavage system H protein (129 aa).

Positions 24-106 (TYTVGITEHA…YAGGWIFKIK (83 aa)) constitute a Lipoyl-binding domain. Lys65 is subject to N6-lipoyllysine.

The protein belongs to the GcvH family. The glycine cleavage system is composed of four proteins: P, T, L and H. Requires (R)-lipoate as cofactor.

Functionally, the glycine cleavage system catalyzes the degradation of glycine. The H protein shuttles the methylamine group of glycine from the P protein to the T protein. This Escherichia coli O139:H28 (strain E24377A / ETEC) protein is Glycine cleavage system H protein.